The following is a 279-amino-acid chain: Large ribosomal subunit protein uL24m (279 aa).

Residues 1–31 (MRDLRKLIPRLRGPGTNVLKMKKPLPLHMRT) constitute a mitochondrion transit peptide. Positions 34–51 (REHLNKSDPTVKDDKSAK) are enriched in basic and acidic residues. The disordered stretch occupies residues 34 to 56 (REHLNKSDPTVKDDKSAKPELPF). The KOW domain occupies 70–100 (KGDYVYVHQGPLKGKWGRVVETNKYTNGITI). The segment at 185-204 (PRPKTEDKPKDPEGKLDTKN) is disordered. A compositionally biased stretch (basic and acidic residues) spans 187–202 (PKTEDKPKDPEGKLDT).

This sequence belongs to the universal ribosomal protein uL24 family. In terms of assembly, component of the mitochondrial large ribosomal subunit (mt-LSU). Mature yeast 74S mitochondrial ribosomes consist of a small (37S) and a large (54S) subunit. The 37S small subunit contains a 15S ribosomal RNA (15S mt-rRNA) and at least 32 different proteins. The 54S large subunit contains a 21S rRNA (21S mt-rRNA) and at least 45 different proteins. uL24m forms the wall of the exit tunnel.

The protein resides in the mitochondrion. In terms of biological role, component of the mitochondrial ribosome (mitoribosome), a dedicated translation machinery responsible for the synthesis of mitochondrial genome-encoded proteins, including at least some of the essential transmembrane subunits of the mitochondrial respiratory chain. The mitoribosomes are attached to the mitochondrial inner membrane and translation products are cotranslationally integrated into the membrane. The polypeptide is Large ribosomal subunit protein uL24m (mrpl40) (Schizosaccharomyces pombe (strain 972 / ATCC 24843) (Fission yeast)).